The sequence spans 337 residues: Methylthioribose-1-phosphate isomerase (337 aa).

Substrate contacts are provided by residues 47–49 (RGA), Arg-81, and Gln-184. The active-site Proton donor is the Asp-225. A substrate-binding site is contributed by 235-236 (NK).

The protein belongs to the eIF-2B alpha/beta/delta subunits family. MtnA subfamily.

The catalysed reaction is 5-(methylsulfanyl)-alpha-D-ribose 1-phosphate = 5-(methylsulfanyl)-D-ribulose 1-phosphate. Its pathway is amino-acid biosynthesis; L-methionine biosynthesis via salvage pathway; L-methionine from S-methyl-5-thio-alpha-D-ribose 1-phosphate: step 1/6. Functionally, catalyzes the interconversion of methylthioribose-1-phosphate (MTR-1-P) into methylthioribulose-1-phosphate (MTRu-1-P). The protein is Methylthioribose-1-phosphate isomerase of Parasynechococcus marenigrum (strain WH8102).